The following is a 228-amino-acid chain: Ribonuclease 3 (228 aa).

In terms of domain architecture, RNase III spans 5 to 127; that stretch reads LMALQARLQH…VIGAVYLDAG (123 aa). Mg(2+) is bound at residue E40. The active site involves D44. Positions 113 and 116 each coordinate Mg(2+). The active site involves E116. The DRBM domain occupies 154–224; it reads DPKTELQEWL…AAAMLQTLKA (71 aa).

This sequence belongs to the ribonuclease III family. Homodimer. Mg(2+) serves as cofactor.

Its subcellular location is the cytoplasm. It catalyses the reaction Endonucleolytic cleavage to 5'-phosphomonoester.. In terms of biological role, digests double-stranded RNA. Involved in the processing of primary rRNA transcript to yield the immediate precursors to the large and small rRNAs (23S and 16S). Processes some mRNAs, and tRNAs when they are encoded in the rRNA operon. Processes pre-crRNA and tracrRNA of type II CRISPR loci if present in the organism. The polypeptide is Ribonuclease 3 (Albidiferax ferrireducens (strain ATCC BAA-621 / DSM 15236 / T118) (Rhodoferax ferrireducens)).